Consider the following 189-residue polypeptide: MADILTQLQTCLDQLATQFYATIGYLSTYHDNSPATTPTNIPNAAPALAKIPKNSTAPPVPAGAPVPSQSSPPPPQTQRGASEAAADPNLPPAPDSPRTFASRQRELARDLIIKEQQIEYLISVLPGIDSSEAEQEKRIRELEAELRGVEEEREAKIRELRTLGRTLERVMGAVETGIYGDRAVLERDS.

The tract at residues 50–102 (KIPKNSTAPPVPAGAPVPSQSSPPPPQTQRGASEAAADPNLPPAPDSPRTFAS) is disordered. A compositionally biased stretch (pro residues) spans 58 to 76 (PPVPAGAPVPSQSSPPPPQ). The stretch at 127–170 (GIDSSEAEQEKRIRELEAELRGVEEEREAKIRELRTLGRTLERV) forms a coiled coil.

The protein belongs to the Mediator complex subunit 21 family. In terms of assembly, component of the Mediator complex.

It localises to the nucleus. Its function is as follows. Component of the Mediator complex, a coactivator involved in the regulated transcription of nearly all RNA polymerase II-dependent genes. Mediator functions as a bridge to convey information from gene-specific regulatory proteins to the basal RNA polymerase II transcription machinery. Mediator is recruited to promoters by direct interactions with regulatory proteins and serves as a scaffold for the assembly of a functional preinitiation complex with RNA polymerase II and the general transcription factors. This is Mediator of RNA polymerase II transcription subunit 21 (srb7) from Aspergillus clavatus (strain ATCC 1007 / CBS 513.65 / DSM 816 / NCTC 3887 / NRRL 1 / QM 1276 / 107).